A 147-amino-acid chain; its full sequence is Hemoglobin subunit gamma-1 (147 aa).

Gly-2 is subject to N-acetylglycine. The Globin domain maps to 3–147; that stretch reads HFTEEDKATI…VASALSSRYH (145 aa). Thr-13 carries the phosphothreonine modification. 3 positions are modified to phosphoserine: Ser-45, Ser-51, and Ser-53. The residue at position 60 (Lys-60) is an N6-acetyllysine. Residue His-64 participates in heme b binding. Lys-83 carries the post-translational modification N6-acetyllysine. His-93 is a binding site for heme b. Cys-94 carries the post-translational modification S-nitrosocysteine. The residue at position 140 (Ser-140) is a Phosphoserine.

It belongs to the globin family. In terms of assembly, heterotetramer of two alpha chains and two gamma chains in fetal hemoglobin (Hb F). Red blood cells.

Gamma chains make up the fetal hemoglobin F, in combination with alpha chains. The chain is Hemoglobin subunit gamma-1 (HBG1) from Pongo pygmaeus (Bornean orangutan).